We begin with the raw amino-acid sequence, 539 residues long: O-phosphoserine--tRNA(Cys) ligase (539 aa).

Residues 188–190, 233–235, 275–276, and N327 each bind substrate; these read HMT, SAS, and YY.

This sequence belongs to the class-II aminoacyl-tRNA synthetase family. O-phosphoseryl-tRNA(Cys) synthetase subfamily. As to quaternary structure, homotetramer. Interacts with SepCysS.

The catalysed reaction is tRNA(Cys) + O-phospho-L-serine + ATP = O-phospho-L-seryl-tRNA(Cys) + AMP + diphosphate. Catalyzes the attachment of O-phosphoserine (Sep) to tRNA(Cys). This chain is O-phosphoserine--tRNA(Cys) ligase, found in Methanosarcina mazei (strain ATCC BAA-159 / DSM 3647 / Goe1 / Go1 / JCM 11833 / OCM 88) (Methanosarcina frisia).